Reading from the N-terminus, the 335-residue chain is NmrA-like family domain-containing oxidoreductase hkm9 (335 aa).

NADP(+) is bound by residues 12-17 (GATGNQ), 38-42 (RNPNS), 59-60 (DG), 80-82 (INS), Lys137, and 161-164 (YLEN).

It belongs to the NmrA-type oxidoreductase family.

It participates in secondary metabolite biosynthesis. NmrA-like family domain-containing oxidoreductase; part of the gene cluster that mediates the biosynthesis of hancockiamides, an unusual new family of N-cinnamoylated piperazines. The NRPS hkm10 and the NmrA-like reductase hkm9 are proposed to convert two molecules of L-Phe to the intermediary piperazine called xenocockiamide A. Xenocockiamide A is then converted to hancockiamide D via a series of hydroxylations and O-methylations. The tyrosinase hkm6 may catalyze an aromatic hydroxylation, then the 2-oxoglutarate-dependent Fe(II) dioxygenase hkm4 and the FAD-dependent phenol hydroxylase hkm7 may catalyze consecutive hydroxylations to install 2 more hydroxy groups, and the methyltransferase hkm8 probably catalyzes two methylations using 2 molecules of S-adenosyl-L-methionine (SAM). The NRPS hkm11 activates and transfers trans-cinnamate supplied by the PAL hkm12 to hancockiamide D and produces hancockiamide A. NRPS Hkm11 has the flexibility to tolerate the bulky hancockiamide G as a substrate and the absence of the acetyl-transferase hkm3 opens up the opportunity for hkm11 to introduce a second N-cinnamoyl moiety. The cytochrome P450 monooxygenase hkm5 catalyzes the methylenedioxy bridge formation, converting hancockiamide A into hancockiamide G. Hkm5 can also convert hancockiamide B into hancockiamide C, and hancockiamide D into hancockiamide H. The N-acetyltransferase hkm3 finally transfers an acetyl group to 1-N of piperazine, converting hancockiamide A into hancockiamide B and hancockiamide G into hancockiamide C. The chain is NmrA-like family domain-containing oxidoreductase hkm9 from Aspergillus hancockii.